A 50-amino-acid polypeptide reads, in one-letter code: Sperm protamine P1 (50 aa).

Disulfide bonds link Cys-7–Cys-15 and Cys-38–Cys-46.

The protein belongs to the protamine P1 family. As to quaternary structure, cross-linked by interchain disulfide bonds around the DNA-helix. As to expression, testis.

Its subcellular location is the nucleus. It localises to the chromosome. In terms of biological role, protamines substitute for histones in the chromatin of sperm during the haploid phase of spermatogenesis. They compact sperm DNA into a highly condensed, stable and inactive complex. The polypeptide is Sperm protamine P1 (PRM1) (Equus asinus (Donkey)).